The chain runs to 429 residues: UDP-N-acetylglucosamine 1-carboxyvinyltransferase 2 (429 aa).

22–23 is a phosphoenolpyruvate binding site; it reads KN. UDP-N-acetyl-alpha-D-glucosamine is bound at residue R92. The active-site Proton donor is C116. A 2-(S-cysteinyl)pyruvic acid O-phosphothioketal modification is found at C116. UDP-N-acetyl-alpha-D-glucosamine-binding positions include 121–125, D305, and I327; that span reads RPIDQ.

The protein belongs to the EPSP synthase family. MurA subfamily.

Its subcellular location is the cytoplasm. It catalyses the reaction phosphoenolpyruvate + UDP-N-acetyl-alpha-D-glucosamine = UDP-N-acetyl-3-O-(1-carboxyvinyl)-alpha-D-glucosamine + phosphate. The protein operates within cell wall biogenesis; peptidoglycan biosynthesis. In terms of biological role, cell wall formation. Adds enolpyruvyl to UDP-N-acetylglucosamine. The polypeptide is UDP-N-acetylglucosamine 1-carboxyvinyltransferase 2 (Bacillus subtilis (strain 168)).